Here is a 531-residue protein sequence, read N- to C-terminus: Inactive beta-amylase 4, chloroplastic (531 aa).

The N-terminal 62 residues, 1–62 (MTETGVIGCG…KRGRFITKLR (62 aa)), are a transit peptide targeting the chloroplast.

The protein belongs to the glycosyl hydrolase 14 family. In terms of tissue distribution, preferentially expressed in vascular tissue of cotyledons, leaves, petioles, stems, petals, siliques and roots, particularly in phloem. Also present in root tip.

The protein localises to the plastid. It is found in the chloroplast. Its function is as follows. No alpha-1,4-glucan hydrolase activity, including beta-amylase, alpha-amylase, a-glucosidase or alpha-amyloglucosidase. However, facilitates or regulates starch breakdown, especially at night, by a mechanism involving direct interaction with starch or other alpha-1,4-glucan. This Arabidopsis thaliana (Mouse-ear cress) protein is Inactive beta-amylase 4, chloroplastic (BAM4).